The following is a 417-amino-acid chain: Serine hydroxymethyltransferase (417 aa).

Residues L119 and G123–L125 contribute to the (6S)-5,6,7,8-tetrahydrofolate site. K227 carries the post-translational modification N6-(pyridoxal phosphate)lysine.

The protein belongs to the SHMT family. Homodimer. Pyridoxal 5'-phosphate serves as cofactor.

Its subcellular location is the cytoplasm. The catalysed reaction is (6R)-5,10-methylene-5,6,7,8-tetrahydrofolate + glycine + H2O = (6S)-5,6,7,8-tetrahydrofolate + L-serine. Its pathway is one-carbon metabolism; tetrahydrofolate interconversion. It participates in amino-acid biosynthesis; glycine biosynthesis; glycine from L-serine: step 1/1. In terms of biological role, catalyzes the reversible interconversion of serine and glycine with tetrahydrofolate (THF) serving as the one-carbon carrier. This reaction serves as the major source of one-carbon groups required for the biosynthesis of purines, thymidylate, methionine, and other important biomolecules. Also exhibits THF-independent aldolase activity toward beta-hydroxyamino acids, producing glycine and aldehydes, via a retro-aldol mechanism. This Buchnera aphidicola subsp. Cinara cedri (strain Cc) protein is Serine hydroxymethyltransferase.